The following is a 556-amino-acid chain: Glucose-6-phosphate isomerase (556 aa).

Glutamate 364 functions as the Proton donor in the catalytic mechanism. Catalysis depends on residues histidine 395 and lysine 521.

It belongs to the GPI family.

Its subcellular location is the cytoplasm. It catalyses the reaction alpha-D-glucose 6-phosphate = beta-D-fructose 6-phosphate. It functions in the pathway carbohydrate biosynthesis; gluconeogenesis. The protein operates within carbohydrate degradation; glycolysis; D-glyceraldehyde 3-phosphate and glycerone phosphate from D-glucose: step 2/4. Catalyzes the reversible isomerization of glucose-6-phosphate to fructose-6-phosphate. This is Glucose-6-phosphate isomerase from Corynebacterium kroppenstedtii (strain DSM 44385 / JCM 11950 / CIP 105744 / CCUG 35717).